Consider the following 141-residue polypeptide: uncharacterized protein (141 aa).

The disordered stretch occupies residues 1–61 (IRLLHSLTPP…PPPPPPPRRA (61 aa)). Positions 8-58 (TPPPPPPPPPPPPPPPPPPPPPPPPPPPPPPPPPPPPPPPPPPPPPPPPPP) are enriched in pro residues. Residues 98-116 (KRLLVAYPVRHFLSAACQF) constitute a DNA-binding region (H-T-H motif).

This is an uncharacterized protein from Owenia fusiformis (Polychaete worm).